Here is a 151-residue protein sequence, read N- to C-terminus: US8.5 protein (151 aa).

Positions 27–107 are disordered; that stretch reads SSQPLDPEGP…APSPHPRPPG (81 aa). Positions 80-91 are enriched in basic and acidic residues; the sequence is SDERGPPRHDRP.

The protein localises to the host nucleus. It is found in the host nucleolus. The sequence is that of US8.5 protein (US8.5) from Human herpesvirus 1 (strain F) (HHV-1).